The following is a 300-amino-acid chain: 33 kDa chaperonin (300 aa).

Cystine bridges form between cysteine 235-cysteine 237 and cysteine 269-cysteine 272.

It belongs to the HSP33 family. Under oxidizing conditions two disulfide bonds are formed involving the reactive cysteines. Under reducing conditions zinc is bound to the reactive cysteines and the protein is inactive.

The protein localises to the cytoplasm. Functionally, redox regulated molecular chaperone. Protects both thermally unfolding and oxidatively damaged proteins from irreversible aggregation. Plays an important role in the bacterial defense system toward oxidative stress. This Pseudomonas fluorescens (strain ATCC BAA-477 / NRRL B-23932 / Pf-5) protein is 33 kDa chaperonin.